The following is a 234-amino-acid chain: UPF0173 metal-dependent hydrolase Meso_1362 (234 aa).

The protein belongs to the UPF0173 family.

The sequence is that of UPF0173 metal-dependent hydrolase Meso_1362 from Chelativorans sp. (strain BNC1).